The following is an 878-amino-acid chain: Phosphoenolpyruvate carboxylase (878 aa).

Residues H138 and K544 contribute to the active site.

This sequence belongs to the PEPCase type 1 family. Mg(2+) is required as a cofactor.

It carries out the reaction oxaloacetate + phosphate = phosphoenolpyruvate + hydrogencarbonate. Functionally, forms oxaloacetate, a four-carbon dicarboxylic acid source for the tricarboxylic acid cycle. This Psychromonas ingrahamii (strain DSM 17664 / CCUG 51855 / 37) protein is Phosphoenolpyruvate carboxylase.